A 229-amino-acid chain; its full sequence is MEHPYLFFVKLFEALGFEHFAHTSVHIIYTWVVMALLITLGVLGARNIQIVPTKMQNFLEVLISGIEEFMVSVTGEEGRWFFPLAGTIAIFIAVSNLIGLVPGFFPPTASINTPLACAIVVFVFTHFIGIKYHGPKYIKHFLGPVWWLAPLIFPIEIIGHLARVLSLTFRLFGNMMGHESVLVILFMLGGAFFAPLPIMALGIFVAFVQAFVFFLLSVMYFAGAMEHAH.

The next 7 helical transmembrane spans lie at 25 to 45, 58 to 75, 81 to 101, 110 to 130, 141 to 161, 175 to 195, and 196 to 216; these read VHIIYTWVVMALLITLGVLGA, FLEVLISGIEEFMVSVTG, FFPLAGTIAIFIAVSNLIGLV, SINTPLACAIVVFVFTHFIGI, FLGPVWWLAPLIFPIEIIGHL, MMGHESVLVILFMLGGAFFAP, and LPIMALGIFVAFVQAFVFFLL.

It belongs to the ATPase A chain family. In terms of assembly, F-type ATPases have 2 components, CF(1) - the catalytic core - and CF(0) - the membrane proton channel. CF(1) has five subunits: alpha(3), beta(3), gamma(1), delta(1), epsilon(1). CF(0) has three main subunits: a(1), b(2) and c(9-12). The alpha and beta chains form an alternating ring which encloses part of the gamma chain. CF(1) is attached to CF(0) by a central stalk formed by the gamma and epsilon chains, while a peripheral stalk is formed by the delta and b chains.

The protein localises to the cell inner membrane. Its function is as follows. Key component of the proton channel; it plays a direct role in the translocation of protons across the membrane. This chain is ATP synthase subunit a, found in Desulfosudis oleivorans (strain DSM 6200 / JCM 39069 / Hxd3) (Desulfococcus oleovorans).